The primary structure comprises 560 residues: Serine palmitoyltransferase 2 (560 aa).

A helical transmembrane segment spans residues 65–85 (PMLVAVLTYVGYGVLTLFGYL). N6-(pyridoxal phosphate)lysine is present on lysine 377.

This sequence belongs to the class-II pyridoxal-phosphate-dependent aminotransferase family. In terms of assembly, component of the serine palmitoyltransferase (SPT) complex, which is composed of SPTLC1, SPTLC2 or SPTLC3 and SPTSSA or SPTSSB. The heterodimer consisting of SPTLC1 and SPTLC2/SPTLC3 forms the catalytic core of the enzyme, while SPTSSA or SPTSSB subunits determine substrate specificity. SPT also interacts with ORMDL proteins, especially ORMDL3, which negatively regulate SPT activity in the presence of ceramides. Forms dimers of heterodimers with SPTLC1. The cofactor is pyridoxal 5'-phosphate. Expressed in astrocytes.

It is found in the endoplasmic reticulum membrane. The catalysed reaction is L-serine + hexadecanoyl-CoA + H(+) = 3-oxosphinganine + CO2 + CoA. It carries out the reaction octadecanoyl-CoA + L-serine + H(+) = 3-oxoeicosasphinganine + CO2 + CoA. It functions in the pathway lipid metabolism; sphingolipid metabolism. SPT complex catalytic activity is negatively regulated by ORMDL proteins, including ORMDL3, in the presence of ceramides. This mechanism allows to maintain ceramide levels at sufficient concentrations for the production of complex sphingolipids, but which prevents the accumulation of ceramides to levels that trigger apoptosis. Functionally, component of the serine palmitoyltransferase multisubunit enzyme (SPT) that catalyzes the initial and rate-limiting step in sphingolipid biosynthesis by condensing L-serine and activated acyl-CoA (most commonly palmitoyl-CoA) to form long-chain bases. The SPT complex is composed of SPTLC1, SPTLC2 or SPTLC3 and SPTSSA or SPTSSB. Within this complex, the heterodimer consisting of SPTLC1 and SPTLC2/SPTLC3 forms the catalytic core. The composition of the serine palmitoyltransferase (SPT) complex determines the substrate preference. The SPTLC1-SPTLC2-SPTSSA complex shows a strong preference for C16-CoA substrate, while the SPTLC1-SPTLC3-SPTSSA isozyme uses both C14-CoA and C16-CoA as substrates, with a slight preference for C14-CoA. The SPTLC1-SPTLC2-SPTSSB complex shows a strong preference for C18-CoA substrate, while the SPTLC1-SPTLC3-SPTSSB isozyme displays an ability to use a broader range of acyl-CoAs, without apparent preference. Crucial for adipogenesis. This is Serine palmitoyltransferase 2 from Rattus norvegicus (Rat).